The primary structure comprises 730 residues: 1,4-alpha-glucan branching enzyme GlgB (730 aa).

The active-site Nucleophile is Asp-405. The active-site Proton donor is Glu-458.

The protein belongs to the glycosyl hydrolase 13 family. GlgB subfamily. Monomer.

It carries out the reaction Transfers a segment of a (1-&gt;4)-alpha-D-glucan chain to a primary hydroxy group in a similar glucan chain.. It participates in glycan biosynthesis; glycogen biosynthesis. In terms of biological role, catalyzes the formation of the alpha-1,6-glucosidic linkages in glycogen by scission of a 1,4-alpha-linked oligosaccharide from growing alpha-1,4-glucan chains and the subsequent attachment of the oligosaccharide to the alpha-1,6 position. In Haemophilus influenzae (strain PittGG), this protein is 1,4-alpha-glucan branching enzyme GlgB.